Consider the following 496-residue polypeptide: Aldehyde dehydrogenase (496 aa).

Catalysis depends on residues E263 and C296.

It belongs to the aldehyde dehydrogenase family.

It is found in the cytoplasm. It catalyses the reaction an aldehyde + NAD(+) + H2O = a carboxylate + NADH + 2 H(+). In Davidiella tassiana (Mycosphaerella tassiana), this protein is Aldehyde dehydrogenase (CLAH10).